The following is a 473-amino-acid chain: UDP-N-acetylmuramate--L-alanine ligase (473 aa).

119–125 (GTHGKTT) contacts ATP.

This sequence belongs to the MurCDEF family.

It is found in the cytoplasm. The enzyme catalyses UDP-N-acetyl-alpha-D-muramate + L-alanine + ATP = UDP-N-acetyl-alpha-D-muramoyl-L-alanine + ADP + phosphate + H(+). It participates in cell wall biogenesis; peptidoglycan biosynthesis. In terms of biological role, cell wall formation. The polypeptide is UDP-N-acetylmuramate--L-alanine ligase (Caulobacter vibrioides (strain NA1000 / CB15N) (Caulobacter crescentus)).